The primary structure comprises 388 residues: Succinate--CoA ligase [ADP-forming] subunit beta (388 aa).

An ATP-grasp domain is found at lysine 9–lysine 245. Residues lysine 46, glycine 53–glycine 55, glutamate 100, tyrosine 103, and glutamate 108 contribute to the ATP site. Residues asparagine 200 and aspartate 214 each contribute to the Mg(2+) site. Residues asparagine 265 and glycine 322 to valine 324 contribute to the substrate site.

It belongs to the succinate/malate CoA ligase beta subunit family. Heterotetramer of two alpha and two beta subunits. It depends on Mg(2+) as a cofactor.

It catalyses the reaction succinate + ATP + CoA = succinyl-CoA + ADP + phosphate. It carries out the reaction GTP + succinate + CoA = succinyl-CoA + GDP + phosphate. Its pathway is carbohydrate metabolism; tricarboxylic acid cycle; succinate from succinyl-CoA (ligase route): step 1/1. Functionally, succinyl-CoA synthetase functions in the citric acid cycle (TCA), coupling the hydrolysis of succinyl-CoA to the synthesis of either ATP or GTP and thus represents the only step of substrate-level phosphorylation in the TCA. The beta subunit provides nucleotide specificity of the enzyme and binds the substrate succinate, while the binding sites for coenzyme A and phosphate are found in the alpha subunit. The chain is Succinate--CoA ligase [ADP-forming] subunit beta from Laribacter hongkongensis (strain HLHK9).